Here is a 256-residue protein sequence, read N- to C-terminus: Cell division protein DivIB (256 aa).

Over 1–23 (MSKDLISTDEYIKIKKKRKRIKK) the chain is Cytoplasmic. Residues 24 to 44 (IVVLFIFLISILVTLCLKIPY) form a helical membrane-spanning segment. In terms of domain architecture, POTRA spans 45–113 (FNIESIEIKG…NKLQIYVKER (69 aa)). Residues 45–256 (FNIESIEIKG…EGNPVFYIEK (212 aa)) lie on the Extracellular side of the membrane.

This sequence belongs to the FtsQ/DivIB family. DivIB subfamily.

Its subcellular location is the cell membrane. Its function is as follows. Cell division protein that may be involved in stabilizing or promoting the assembly of the division complex. In Clostridium botulinum (strain Hall / ATCC 3502 / NCTC 13319 / Type A), this protein is Cell division protein DivIB.